Here is a 443-residue protein sequence, read N- to C-terminus: Glutamate--tRNA ligase 2 (443 aa).

Residues 7–17 (PSPTGLIHVGN) carry the 'HIGH' region motif. A 'KMSKS' region motif is present at residues 240 to 244 (KLSKR). K243 is an ATP binding site.

The protein belongs to the class-I aminoacyl-tRNA synthetase family. Glutamate--tRNA ligase type 1 subfamily. Monomer.

The protein resides in the cytoplasm. It catalyses the reaction tRNA(Glu) + L-glutamate + ATP = L-glutamyl-tRNA(Glu) + AMP + diphosphate. Its function is as follows. Catalyzes the attachment of glutamate to tRNA(Glu) in a two-step reaction: glutamate is first activated by ATP to form Glu-AMP and then transferred to the acceptor end of tRNA(Glu). The sequence is that of Glutamate--tRNA ligase 2 from Gluconacetobacter diazotrophicus (strain ATCC 49037 / DSM 5601 / CCUG 37298 / CIP 103539 / LMG 7603 / PAl5).